Reading from the N-terminus, the 104-residue chain is MAISKALFASLLLSLLLLEQVQSIQTDQVTSNAISEAAYSYKKIDCGGACAARCRLSSRPRLCNRACGTCCARCNCVPPGTSGNTETCPCYASLTTHGNKRKCP.

Positions 1 to 23 are cleaved as a signal peptide; the sequence is MAISKALFASLLLSLLLLEQVQS. Residues 24–38 constitute a propeptide, removed in mature form; it reads IQTDQVTSNAISEAA.

Belongs to the GASA family. Six disulfide bonds may be present. Expressed in tubers, stems, flowers, shoot apex and leaves, but not in roots or stolons.

The protein resides in the secreted. Its subcellular location is the cell wall. Its function is as follows. Has an antimicrobial activity. Causes a rapid aggregation of both Gram-positive and Gram-negative bacteria, but the antimicrobial activity is not correlated with the capacity to aggregate bacteria. The sequence is that of Snakin-2 (SN2) from Solanum tuberosum (Potato).